We begin with the raw amino-acid sequence, 333 residues long: Multiheme cytochrome MtrA (333 aa).

The first 34 residues, 1-34, serve as a signal peptide directing secretion; it reads MKNSLKMKNLLPALVITMAMSAVMSLCIAPNAYA.

The polypeptide is Multiheme cytochrome MtrA (mtrA) (Shewanella baltica (strain OS185)).